The chain runs to 323 residues: Nucleotide-binding protein ZMO1325 (323 aa).

25-32 (GLSGAGKS) is a binding site for ATP. Residue 78–81 (DSRT) coordinates GTP.

Belongs to the RapZ-like family.

Functionally, displays ATPase and GTPase activities. The chain is Nucleotide-binding protein ZMO1325 from Zymomonas mobilis subsp. mobilis (strain ATCC 31821 / ZM4 / CP4).